Reading from the N-terminus, the 431-residue chain is Tol-Pal system protein TolB (431 aa).

An N-terminal signal peptide occupies residues 1-26 (MSLMTKLGFRALVASCLIAAGGAANA). Residues 411–431 (PQILSVQGGSVREPSWGPFMQ) form a disordered region.

The protein belongs to the TolB family. As to quaternary structure, the Tol-Pal system is composed of five core proteins: the inner membrane proteins TolA, TolQ and TolR, the periplasmic protein TolB and the outer membrane protein Pal. They form a network linking the inner and outer membranes and the peptidoglycan layer.

Its subcellular location is the periplasm. Functionally, part of the Tol-Pal system, which plays a role in outer membrane invagination during cell division and is important for maintaining outer membrane integrity. The protein is Tol-Pal system protein TolB of Burkholderia vietnamiensis (strain G4 / LMG 22486) (Burkholderia cepacia (strain R1808)).